We begin with the raw amino-acid sequence, 320 residues long: MSSCNFTHATFMLIGIPGLEEAHFWFGFPLLSMYAVALFGNCIVVFIVRTERSLHAPMYLFLCMLAAIDLALSTSTMPKILALFWFDSREITFDACLAQMFFIHALSAIESTILLAMAFDRYVAICHPLRHAAVLNNTVTVQIGMVALVRGSLFFFPLPLLIKRLAFCHSNVLSHSYCVHQDVMKLAYTDTLPNVVYGLTAILLVMGVDVMFISLSYFLIIRAVLQLPSKSERAKAFGTCVSHIGVVLAFYVPLIGLSVVHRFGNSLDPIVHVLMGDVYLLLPPVINPIIYGAKTKQIRTRVLAMFKISCDKDIEAGGNT.

Topologically, residues 1-24 (MSSCNFTHATFMLIGIPGLEEAHF) are extracellular. Asn-5 carries an N-linked (GlcNAc...) asparagine glycan. A helical transmembrane segment spans residues 25-45 (WFGFPLLSMYAVALFGNCIVV). Residues 46 to 53 (FIVRTERS) lie on the Cytoplasmic side of the membrane. A helical membrane pass occupies residues 54–74 (LHAPMYLFLCMLAAIDLALST). Topologically, residues 75–98 (STMPKILALFWFDSREITFDACLA) are extracellular. Cys-96 and Cys-178 form a disulfide bridge. Residues 99–119 (QMFFIHALSAIESTILLAMAF) form a helical membrane-spanning segment. Residues 120–138 (DRYVAICHPLRHAAVLNNT) lie on the Cytoplasmic side of the membrane. The helical transmembrane segment at 139–159 (VTVQIGMVALVRGSLFFFPLP) threads the bilayer. The Extracellular portion of the chain corresponds to 160–195 (LLIKRLAFCHSNVLSHSYCVHQDVMKLAYTDTLPNV). The helical transmembrane segment at 196-216 (VYGLTAILLVMGVDVMFISLS) threads the bilayer. The Cytoplasmic segment spans residues 217-236 (YFLIIRAVLQLPSKSERAKA). The chain crosses the membrane as a helical span at residues 237-257 (FGTCVSHIGVVLAFYVPLIGL). The Extracellular segment spans residues 258-272 (SVVHRFGNSLDPIVH). A helical membrane pass occupies residues 273–293 (VLMGDVYLLLPPVINPIIYGA). Over 294 to 320 (KTKQIRTRVLAMFKISCDKDIEAGGNT) the chain is Cytoplasmic.

This sequence belongs to the G-protein coupled receptor 1 family. As to expression, expressed in brain and liver. Expressed only in some areas of the brain and in the olfactory epithelium.

Its subcellular location is the cell membrane. It localises to the early endosome membrane. In terms of biological role, olfactory receptor. The activity of this receptor is probably mediated by G-proteins which induce elevation of intracellular Ca(2+), cAMP and activation of phosphorylation of the protein kinases PKA and MAPK3/MAPK1. Activation of OR51E2 may affect melanocyte proliferation, differentiation, and melanogenesis and may increase proliferation and migration of primary retinal pigment epithelial (RPE) cells. Activated by the short chain fatty acids (SCFA), acetate and propionate. In response to SCFA, may positively regulate renin secretion and increase blood pressure. May also be activated by steroid hormones and regulate cell proliferation. Activated by L-lactate in glomus cells. This chain is Olfactory receptor 51E2 (Or51e2), found in Rattus norvegicus (Rat).